A 226-amino-acid polypeptide reads, in one-letter code: uncharacterized protein (226 aa).

The region spanning 1–112 is the Response regulatory domain; that stretch reads MLVEDDHSIS…ELTARVKAAI (112 aa). Residue Asp-48 is modified to 4-aspartylphosphate. Residues 126-225 constitute a DNA-binding region (ompR/PhoB-type); that stretch reads NKVIRIHQLA…LWGIGYKLGE (100 aa).

Post-translationally, phosphorylated by YcbM.

It localises to the cytoplasm. Its function is as follows. Member of the two-component regulatory system YcbM/YcbL. This is an uncharacterized protein from Bacillus subtilis (strain 168).